We begin with the raw amino-acid sequence, 509 residues long: L-aspartate oxidase (509 aa).

FAD contacts are provided by residues 14–17 (SGIA), 45–52 (STDWAQGG), and D214. R279 serves as the catalytic Proton donor/acceptor. FAD contacts are provided by residues E358 and 374–375 (SL). Disordered regions lie at residues 389–412 (AAGD…PDLP) and 486–509 (NPES…DAGH). A compositionally biased stretch (basic and acidic residues) spans 402 to 412 (PELRDRDPDLP). The segment covering 499–509 (AAAEEAPDAGH) has biased composition (acidic residues).

Belongs to the FAD-dependent oxidoreductase 2 family. NadB subfamily. Requires FAD as cofactor.

It localises to the cytoplasm. The enzyme catalyses L-aspartate + O2 = iminosuccinate + H2O2. The protein operates within cofactor biosynthesis; NAD(+) biosynthesis; iminoaspartate from L-aspartate (oxidase route): step 1/1. Functionally, catalyzes the oxidation of L-aspartate to iminoaspartate, the first step in the de novo biosynthesis of NAD(+). This chain is L-aspartate oxidase (nadB), found in Halobacterium salinarum (strain ATCC 700922 / JCM 11081 / NRC-1) (Halobacterium halobium).